A 114-amino-acid chain; its full sequence is Replication initiation control protein YabA (114 aa).

His84, Cys86, Cys102, and Cys105 together coordinate Zn(2+).

This sequence belongs to the YabA family. As to quaternary structure, homotetramer. Interacts with both DnaA and DnaN, acting as a bridge between these two proteins. It depends on Zn(2+) as a cofactor.

Its subcellular location is the cytoplasm. The protein localises to the nucleoid. Functionally, involved in control of chromosome replication initiation. Inhibits the cooperative binding of DnaA to the oriC region, thus negatively regulating initiation of chromosome replication. Inhibits the ability of DnaA-ATP to form a helix on DNA; does not disassemble preformed DnaA-DNA helices. Decreases the residence time of DnaA on the chromosome at its binding sites (oriC, replication forks and promoter-binding sites). Tethers DnaA to the replication machinery via the DNA polymerase beta sliding clamp subunit (dnaN). Associates with oriC and other DnaA targets on the chromosome in a DnaA-dependent manner. This chain is Replication initiation control protein YabA, found in Ligilactobacillus salivarius (strain UCC118) (Lactobacillus salivarius).